A 513-amino-acid polypeptide reads, in one-letter code: Sphingolipid C9-methyltransferase 1 (513 aa).

Helical transmembrane passes span 63–83 and 85–105; these read FLVAALLGIPQWLSWKLGGGL and TAIFLSIFTTIPVLAVIWTVM. S-adenosyl-L-methionine is bound by residues 228–229, 265–273, 291–296, and 321–322; these read YT, LLDIGCGWG, TLARNQ, and YR.

It belongs to the CFA/CMAS family.

It is found in the membrane. The enzyme catalyses a (4E,8E)-4-sphinga-4,8-dienine ceramide + S-adenosyl-L-methionine = a 9-methyl-(4E,8E)-sphinga-4,8-dienine ceramide + S-adenosyl-L-homocysteine + H(+). It functions in the pathway lipid metabolism; sphingolipid metabolism. Functionally, catalyzes methylation of the sphingoid base component of glucosylceramides (GluCers) at the C9-position. Sphingolipid C9-methylation requires 4,8-desaturated ceramides as substrates. Glucosylceramides play important roles in the growth, differentiation and pathogenicity. The methyl group at the C9-position distinguishes fungal glucosylceramides from those of plants and animals, and may thus play a role in host-pathogen interactions enabling the host to recognize the fungal attack and initiate specific defense responses. However, C-9 methylation of GlcCers is not essential for the sensitivity of F.graminearum to plant defensins MsDef1 and RsAFP2. This is Sphingolipid C9-methyltransferase 1 from Gibberella zeae (strain ATCC MYA-4620 / CBS 123657 / FGSC 9075 / NRRL 31084 / PH-1) (Wheat head blight fungus).